The chain runs to 118 residues: Non-specific lipid-transfer protein 1 (118 aa).

The first 25 residues, 1 to 25 (MAGVMKLACLLLACMIVAGPITSNA), serve as a signal peptide directing secretion. Cystine bridges form between cysteine 29–cysteine 76, cysteine 39–cysteine 53, cysteine 54–cysteine 100, and cysteine 74–cysteine 114.

The protein belongs to the plant LTP family. As to expression, expressed primarily in epidermal cells.

Its subcellular location is the secreted. The protein resides in the cell wall. Its function is as follows. Plant non-specific lipid-transfer proteins transfer phospholipids as well as galactolipids across membranes. May play a role in wax or cutin deposition in the cell walls of expanding epidermal cells and certain secretory tissues. This Arabidopsis thaliana (Mouse-ear cress) protein is Non-specific lipid-transfer protein 1 (LTP1).